The primary structure comprises 310 residues: HPr kinase/phosphorylase (310 aa).

Active-site residues include H138 and K159. 153 to 160 serves as a coordination point for ATP; that stretch reads GGSGVGKS. S160 contributes to the Mg(2+) binding site. The active-site Proton acceptor; for phosphorylation activity. Proton donor; for dephosphorylation activity is the D177. The interval 201-210 is important for the catalytic mechanism of both phosphorylation and dephosphorylation; that stretch reads LEIRGLGIIN. E202 lines the Mg(2+) pocket. The active site involves R243. Positions 264–269 are important for the catalytic mechanism of dephosphorylation; the sequence is PVRPGR.

Belongs to the HPrK/P family. In terms of assembly, homohexamer. Mg(2+) is required as a cofactor.

The enzyme catalyses [HPr protein]-L-serine + ATP = [HPr protein]-O-phospho-L-serine + ADP + H(+). It catalyses the reaction [HPr protein]-O-phospho-L-serine + phosphate + H(+) = [HPr protein]-L-serine + diphosphate. Its function is as follows. Catalyzes the ATP- as well as the pyrophosphate-dependent phosphorylation of a specific serine residue in HPr, a phosphocarrier protein of the phosphoenolpyruvate-dependent sugar phosphotransferase system (PTS). HprK/P also catalyzes the pyrophosphate-producing, inorganic phosphate-dependent dephosphorylation (phosphorolysis) of seryl-phosphorylated HPr (P-Ser-HPr). The two antagonistic activities of HprK/P are regulated by several intracellular metabolites, which change their concentration in response to the absence or presence of rapidly metabolisable carbon sources (glucose, fructose, etc.) in the growth medium. Also phosphorylates/dephosphorylates the HPr-like catabolite repression protein crh on a specific serine residue. Therefore, by controlling the phosphorylation state of HPr and crh, HPrK/P is a sensor enzyme that plays a major role in the regulation of carbon metabolism and sugar transport: it mediates carbon catabolite repression (CCR), and regulates PTS-catalyzed carbohydrate uptake and inducer exclusion. This chain is HPr kinase/phosphorylase, found in Shouchella clausii (strain KSM-K16) (Alkalihalobacillus clausii).